Reading from the N-terminus, the 103-residue chain is MQNQRIRIRLKAFDHKLIDQSTAEIVETAKRTGAQVRGPIPLPTRKERFTILVSPHVNKDARDQYEIRTHKRLIDIVEPTEKTVDALMKLDLAAGVDVQISLG.

The protein belongs to the universal ribosomal protein uS10 family. Part of the 30S ribosomal subunit.

Involved in the binding of tRNA to the ribosomes. This Psychromonas ingrahamii (strain DSM 17664 / CCUG 51855 / 37) protein is Small ribosomal subunit protein uS10.